Here is a 587-residue protein sequence, read N- to C-terminus: GATA zinc finger domain-containing protein 3 (587 aa).

Residues N53–N74 are compositionally biased toward low complexity. Disordered stretches follow at residues N53–P141, Q179–S294, and Q312–N392. The span at Q75–D86 shows a compositional bias: polar residues. 5 stretches are compositionally biased toward low complexity: residues N87 to N136, N183 to S202, N237 to G264, G272 to S292, and S316 to Q333. Polar residues-rich tracts occupy residues I340–P358 and N365–S379. The GATA-type zinc-finger motif lies at C500–C525. Residues E536–D587 form a disordered region. The span at Q538–P575 shows a compositional bias: low complexity. Residues S577–D587 are compositionally biased toward polar residues.

The chain is GATA zinc finger domain-containing protein 3 (gtaC) from Dictyostelium discoideum (Social amoeba).